Reading from the N-terminus, the 192-residue chain is Thymidine kinase (192 aa).

ATP contacts are provided by residues serine 9–serine 16 and aspartate 87–glutamine 90. The active-site Proton acceptor is the glutamate 88. Residues cysteine 145, cysteine 147, cysteine 182, and histidine 185 each coordinate Zn(2+).

It belongs to the thymidine kinase family. As to quaternary structure, homotetramer.

It localises to the cytoplasm. It catalyses the reaction thymidine + ATP = dTMP + ADP + H(+). The sequence is that of Thymidine kinase from Photobacterium profundum (strain SS9).